A 382-amino-acid polypeptide reads, in one-letter code: uncharacterized protein (382 aa).

12 helical membrane-spanning segments follow: residues 14-34 (GLLL…LWLA), 45-65 (VVSS…GYVI), 79-99 (FIFA…SWLA), 102-122 (FVAG…LMCS), 131-151 (LLAA…LLVS), 157-177 (LMSV…PLLF), 204-224 (LGVN…GLMP), 235-255 (ASIG…QWPI), 270-290 (VQVF…AMAP), 291-311 (ALFI…AWAC), 325-345 (ALLL…AMLM), and 348-368 (FSDN…LLML).

This sequence belongs to the major facilitator superfamily. YcaD (TC 2.A.1.26) family.

It localises to the cell inner membrane. This is an uncharacterized protein from Escherichia coli (strain K12 / MC4100 / BW2952).